Reading from the N-terminus, the 707-residue chain is G protein-coupled receptor kinase 2 (707 aa).

The interval 1–190 (MADLEAVLAD…ELNMQLTMND (190 aa)) is N-terminal. An RGS domain is found at 54 to 175 (KFDKIFNQKL…LESDKFTRFC (122 aa)). The Protein kinase domain maps to 191–455 (FSVHRIIGRG…PTEVKEHPFF (265 aa)). Residues 197–205 (IGRGGFGEV) and Lys-220 each bind ATP. Asp-318 (proton acceptor) is an active-site residue. In terms of domain architecture, AGC-kinase C-terminal spans 456–523 (KDVDWQTVYL…VISERWQNEI (68 aa)). Residues 558–658 (DVIVHGYIKK…WHTSLRTAHK (101 aa)) enclose the PH domain.

This sequence belongs to the protein kinase superfamily. AGC Ser/Thr protein kinase family. GPRK subfamily. In terms of assembly, interacts with amx-2; the interaction promotes phosphorylation of amx-2. In terms of tissue distribution, expressed in many neurons in the adult including the ASH neurons and other sensory neurons, many interneurons, and motor neurons of the ventral nerve cord. Expressed broadly in head neurons and is detected in several head acetylcholine neurons including the AVA, AVB, AVD and AVE premotor interneurons, the SMD and RMD head motor neurons, and the AIN, AIY, SIA, SIB and SAA interneurons. Expressed in HSN motor neurons and VC4/VC5 motor neurons. Also expressed in vulval muscle cells. Expressed in premotor and RIS interneurons. Expressed in ciliated neurons such as AWA, AWB, AWC, ASH and ADF olfactory and nociceptive neurons, and in chemosensory ASH neurons. Expressed in RMG neurons and AVK interneurons.

The catalysed reaction is [G-protein-coupled receptor] + ATP = [G-protein-coupled receptor]-phosphate + ADP + H(+). Specifically phosphorylates the activated forms of G protein-coupled receptors. Required in adult sensory neurons for chemotaxis. Plays a role in the ASH sensory neurons in the chemotaxis response to NaCl where it is likely to modulate the strength of the NaCl avoidance response which occurs at high NaCl concentrations. Required in the HSN motor neurons for normal egg laying by promoting phosphorylation of amine oxidase amx-2 which inhibits amx-2 activity, preventing metabolism of serotonin. Acts in head acetylcholine neurons to positively regulate locomotion. Inactivates dopamine receptor dop-3 which leads to inactivation of guanine nucleotide-binding protein G(o) subunit goa-1 and activation of the unc-77/nca-1 and nca-2 ion channel proteins. Acts as a positive regulator of swimming by inactivating two dopamine receptors, dop-3 in the premotor interneurons that negatively controls early swimming through the nca ion channel, and dop-1 in the RIS neuron that inhibits late-stage swimming via the signaling of FMRFamide-like neuropeptide flp-11. Controls movement quiescence by negatively regulating multiple targets including egl-4 in ciliated neurons, the level of ligands of the neuropeptide receptor npr-1 in RMG neurons, and the secretion of flp-1 from AVK interneurons. This Caenorhabditis elegans protein is G protein-coupled receptor kinase 2 (grk-2).